Reading from the N-terminus, the 209-residue chain is Urease accessory protein UreG (209 aa).

Gly18–Thr25 is a binding site for GTP.

This sequence belongs to the SIMIBI class G3E GTPase family. UreG subfamily. As to quaternary structure, homodimer. UreD, UreF and UreG form a complex that acts as a GTP-hydrolysis-dependent molecular chaperone, activating the urease apoprotein by helping to assemble the nickel containing metallocenter of UreC. The UreE protein probably delivers the nickel.

The protein resides in the cytoplasm. In terms of biological role, facilitates the functional incorporation of the urease nickel metallocenter. This process requires GTP hydrolysis, probably effectuated by UreG. This is Urease accessory protein UreG from Cupriavidus necator (strain ATCC 17699 / DSM 428 / KCTC 22496 / NCIMB 10442 / H16 / Stanier 337) (Ralstonia eutropha).